The following is a 208-amino-acid chain: MDYLTIALAKGRIEGESFKKFKKMGLGDSIDTDTRKLIFKDEENKIIYIHVKPSDVVTYVEKGVADLGIAGKDTILENETDVYEIYDLGFGKCKFAVAGLKGDSIYREDEYLKVATKYPNIAKKYFKEKGQKIEIIKLNGSVELAPIVGLSDVIVDIVETGNTLKANGLEILEDICNISARIISNRASYRFKYEQIQNIIRLFEELDN.

The protein belongs to the ATP phosphoribosyltransferase family. Short subfamily. Heteromultimer composed of HisG and HisZ subunits.

The protein localises to the cytoplasm. It carries out the reaction 1-(5-phospho-beta-D-ribosyl)-ATP + diphosphate = 5-phospho-alpha-D-ribose 1-diphosphate + ATP. Its pathway is amino-acid biosynthesis; L-histidine biosynthesis; L-histidine from 5-phospho-alpha-D-ribose 1-diphosphate: step 1/9. Its function is as follows. Catalyzes the condensation of ATP and 5-phosphoribose 1-diphosphate to form N'-(5'-phosphoribosyl)-ATP (PR-ATP). Has a crucial role in the pathway because the rate of histidine biosynthesis seems to be controlled primarily by regulation of HisG enzymatic activity. This is ATP phosphoribosyltransferase from Clostridioides difficile (strain 630) (Peptoclostridium difficile).